The primary structure comprises 139 residues: Large-conductance mechanosensitive channel (139 aa).

Helical transmembrane passes span 19 to 39 (VGVI…ADII), 40 to 60 (MPIV…LPLS), and 81 to 101 (GNFL…FMVI).

It belongs to the MscL family. As to quaternary structure, homopentamer.

The protein resides in the cell inner membrane. Channel that opens in response to stretch forces in the membrane lipid bilayer. May participate in the regulation of osmotic pressure changes within the cell. The polypeptide is Large-conductance mechanosensitive channel (Nitrobacter winogradskyi (strain ATCC 25391 / DSM 10237 / CIP 104748 / NCIMB 11846 / Nb-255)).